The sequence spans 262 residues: 3-methyl-2-oxobutanoate hydroxymethyltransferase (262 aa).

2 residues coordinate Mg(2+): Asp43 and Asp82. 3-methyl-2-oxobutanoate-binding positions include 43-44 (DS), Asp82, and Lys110. Glu112 is a Mg(2+) binding site. The active-site Proton acceptor is Glu179.

It belongs to the PanB family. In terms of assembly, homodecamer; pentamer of dimers. Mg(2+) serves as cofactor.

It is found in the cytoplasm. It catalyses the reaction 3-methyl-2-oxobutanoate + (6R)-5,10-methylene-5,6,7,8-tetrahydrofolate + H2O = 2-dehydropantoate + (6S)-5,6,7,8-tetrahydrofolate. Its pathway is cofactor biosynthesis; (R)-pantothenate biosynthesis; (R)-pantoate from 3-methyl-2-oxobutanoate: step 1/2. In terms of biological role, catalyzes the reversible reaction in which hydroxymethyl group from 5,10-methylenetetrahydrofolate is transferred onto alpha-ketoisovalerate to form ketopantoate. This chain is 3-methyl-2-oxobutanoate hydroxymethyltransferase, found in Sodalis glossinidius (strain morsitans).